A 1043-amino-acid chain; its full sequence is Unconventional myosin-Ia (1043 aa).

Positions 8–694 (VGVEDLVLLE…TLFYLEEQRR (687 aa)) constitute a Myosin motor domain. 101–108 (GESGAGKT) provides a ligand contact to ATP. The interval 571 to 593 (VTTLMKNLYSKNPNYIRCIKPNE) is actin-binding. IQ domains lie at 697-719 (LQQL…HYQL), 720-742 (MRKS…HYRK), and 743-772 (MKAS…SGAA). Residues 858 to 1042 (KASYPQSVPI…KGSRCLEVTV (185 aa)) form the TH1 domain.

This sequence belongs to the TRAFAC class myosin-kinesin ATPase superfamily. Myosin family. Phosphorylated by ALPK1.

Involved in directing the movement of organelles along actin filaments. The protein is Unconventional myosin-Ia (MYO1A) of Bos taurus (Bovine).